Consider the following 188-residue polypeptide: UPF0232 protein RHA1_ro03670 (188 aa).

Disordered stretches follow at residues 1–20 (MTDD…PEVK), 31–78 (EARA…QPFG), and 166–188 (PTAP…DTYG). Residues 7–16 (PTAPAAAAPE) are compositionally biased toward low complexity.

The protein belongs to the UPF0232 family.

The protein is UPF0232 protein RHA1_ro03670 of Rhodococcus jostii (strain RHA1).